Reading from the N-terminus, the 506-residue chain is Chromosomal replication initiator protein DnaA (506 aa).

Residues 1-77 (MECATTATTP…IWAEESGAKR (77 aa)) are domain I, interacts with DnaA modulators. Residues 77–162 (RRVDLAVRNA…AVAGDVASGS (86 aa)) form a domain II region. Composition is skewed to basic and acidic residues over residues 103–112 (TERTDMHSGD) and 121–142 (SDGR…RAVE). The tract at residues 103–142 (TERTDMHSGDTRQQSARISDGRSTDARGADGRGSDARAVE) is disordered. The domain III, AAA+ region stretch occupies residues 163–384 (PLDARLTFET…GALNKLLAFN (222 aa)). Residues Gly-210, Gly-212, Lys-213, and Thr-214 each coordinate ATP. A domain IV, binds dsDNA region spans residues 385 to 506 (QLTGEPVTLE…EVLKRLALEA (122 aa)).

This sequence belongs to the DnaA family. As to quaternary structure, oligomerizes as a right-handed, spiral filament on DNA at oriC.

It is found in the cytoplasm. In terms of biological role, plays an essential role in the initiation and regulation of chromosomal replication. ATP-DnaA binds to the origin of replication (oriC) to initiate formation of the DNA replication initiation complex once per cell cycle. Binds the DnaA box (a 9 base pair repeat at the origin) and separates the double-stranded (ds)DNA. Forms a right-handed helical filament on oriC DNA; dsDNA binds to the exterior of the filament while single-stranded (ss)DNA is stabiized in the filament's interior. The ATP-DnaA-oriC complex binds and stabilizes one strand of the AT-rich DNA unwinding element (DUE), permitting loading of DNA polymerase. After initiation quickly degrades to an ADP-DnaA complex that is not apt for DNA replication. Binds acidic phospholipids. This chain is Chromosomal replication initiator protein DnaA, found in Xanthobacter autotrophicus (strain ATCC BAA-1158 / Py2).